The chain runs to 270 residues: tRNA pseudouridine synthase A (270 aa).

Residue Asp60 is the Nucleophile of the active site. Residues 107 to 111 (FHARF) form an RNA binding region. Tyr118 provides a ligand contact to substrate. The segment at 168-172 (QCQSR) is interaction with tRNA.

This sequence belongs to the tRNA pseudouridine synthase TruA family. Homodimer.

It catalyses the reaction uridine(38/39/40) in tRNA = pseudouridine(38/39/40) in tRNA. Functionally, formation of pseudouridine at positions 38, 39 and 40 in the anticodon stem and loop of transfer RNAs. The protein is tRNA pseudouridine synthase A of Escherichia coli (strain 55989 / EAEC).